The chain runs to 189 residues: Acireductone dioxygenase 1 (189 aa).

Positions 102, 104, 108, and 146 each coordinate Fe(2+). Positions 102, 104, 108, and 146 each coordinate Ni(2+).

This sequence belongs to the acireductone dioxygenase (ARD) family. Monomer. Fe(2+) is required as a cofactor. The cofactor is Ni(2+).

The enzyme catalyses 1,2-dihydroxy-5-(methylsulfanyl)pent-1-en-3-one + O2 = 3-(methylsulfanyl)propanoate + CO + formate + 2 H(+). It catalyses the reaction 1,2-dihydroxy-5-(methylsulfanyl)pent-1-en-3-one + O2 = 4-methylsulfanyl-2-oxobutanoate + formate + 2 H(+). The protein operates within amino-acid biosynthesis; L-methionine biosynthesis via salvage pathway; L-methionine from S-methyl-5-thio-alpha-D-ribose 1-phosphate: step 5/6. In terms of biological role, catalyzes 2 different reactions between oxygen and the acireductone 1,2-dihydroxy-3-keto-5-methylthiopentene (DHK-MTPene) depending upon the metal bound in the active site. Fe-containing acireductone dioxygenase (Fe-ARD) produces formate and 2-keto-4-methylthiobutyrate (KMTB), the alpha-ketoacid precursor of methionine in the methionine recycle pathway. Ni-containing acireductone dioxygenase (Ni-ARD) produces methylthiopropionate, carbon monoxide and formate, and does not lie on the methionine recycle pathway. The chain is Acireductone dioxygenase 1 from Nocardia farcinica (strain IFM 10152).